A 235-amino-acid chain; its full sequence is MNELVYGLSALGISLNSVQLGQFETYYQELVDYNSRINLTAITEYKDVQIKHFLDSVSLVLAGIKGDEKLLDVGSGAGFPGLPLKILFPAIQLGLLEATQKKARFLSEITVKLGLSGVEIISQRAEDTAQNPLYRQKYSLVTSRAVADMATLAELTLPFCAVGGRVIAPKKGDIEEEMDRAATAVKKMGGRVFKVIKVELPGLEDGRKLVLLEKISNTPALYPRRAGIPAKTPLI.

Residues Gly-74, Phe-79, Glu-97–Thr-99, Ala-125–Glu-126, and Arg-144 each bind S-adenosyl-L-methionine.

This sequence belongs to the methyltransferase superfamily. RNA methyltransferase RsmG family.

It is found in the cytoplasm. Functionally, specifically methylates the N7 position of a guanine in 16S rRNA. The sequence is that of Ribosomal RNA small subunit methyltransferase G from Dehalococcoides mccartyi (strain CBDB1).